A 110-amino-acid chain; its full sequence is B3 domain-containing protein LOC_Os02g10420 (110 aa).

Positions 1 to 104 form a DNA-binding region, TF-B3; the sequence is MSAMLNENVP…VLSVTVHKAD (104 aa).

It is found in the nucleus. The polypeptide is B3 domain-containing protein LOC_Os02g10420 (Oryza sativa subsp. japonica (Rice)).